Reading from the N-terminus, the 228-residue chain is Urease accessory protein UreF (228 aa).

The protein belongs to the UreF family. As to quaternary structure, ureD, UreF and UreG form a complex that acts as a GTP-hydrolysis-dependent molecular chaperone, activating the urease apoprotein by helping to assemble the nickel containing metallocenter of UreC. The UreE protein probably delivers the nickel.

The protein resides in the cytoplasm. Required for maturation of urease via the functional incorporation of the urease nickel metallocenter. The protein is Urease accessory protein UreF of Alkalilimnicola ehrlichii (strain ATCC BAA-1101 / DSM 17681 / MLHE-1).